A 158-amino-acid chain; its full sequence is Transcription elongation factor GreA (158 aa).

The protein belongs to the GreA/GreB family.

In terms of biological role, necessary for efficient RNA polymerase transcription elongation past template-encoded arresting sites. The arresting sites in DNA have the property of trapping a certain fraction of elongating RNA polymerases that pass through, resulting in locked ternary complexes. Cleavage of the nascent transcript by cleavage factors such as GreA or GreB allows the resumption of elongation from the new 3'terminus. GreA releases sequences of 2 to 3 nucleotides. This Ralstonia nicotianae (strain ATCC BAA-1114 / GMI1000) (Ralstonia solanacearum) protein is Transcription elongation factor GreA.